Reading from the N-terminus, the 421-residue chain is Tol-Pal system protein TolB (421 aa).

Residues 1–16 (MRILVFLWLGLSSLFA) form the signal peptide.

The protein belongs to the TolB family. In terms of assembly, the Tol-Pal system is composed of five core proteins: the inner membrane proteins TolA, TolQ and TolR, the periplasmic protein TolB and the outer membrane protein Pal. They form a network linking the inner and outer membranes and the peptidoglycan layer.

It localises to the periplasm. Its function is as follows. Part of the Tol-Pal system, which plays a role in outer membrane invagination during cell division and is important for maintaining outer membrane integrity. The chain is Tol-Pal system protein TolB from Wolinella succinogenes (strain ATCC 29543 / DSM 1740 / CCUG 13145 / JCM 31913 / LMG 7466 / NCTC 11488 / FDC 602W) (Vibrio succinogenes).